The following is a 263-amino-acid chain: Type-2Bb cytolytic delta-endotoxin (263 aa).

Belongs to the cyt1/cyt2 endotoxin family. In terms of processing, active after proteolytic processing.

Functionally, kills the larvae of dipteran insects by making pores in the epithelial cell membrane of the insect midgut. This chain is Type-2Bb cytolytic delta-endotoxin (cyt2Bb1), found in Bacillus thuringiensis subsp. jegathesan.